A 358-amino-acid chain; its full sequence is Phospho-N-acetylmuramoyl-pentapeptide-transferase (358 aa).

The next 10 membrane-spanning stretches (helical) occupy residues threonine 26 to arginine 46, threonine 71 to alanine 91, leucine 93 to phenylalanine 113, methionine 134 to phenylalanine 154, leucine 170 to asparagine 190, glycine 197 to alanine 217, alanine 234 to phenylalanine 254, valine 261 to leucine 281, isoleucine 286 to valine 306, and lysine 335 to leucine 355.

It belongs to the glycosyltransferase 4 family. MraY subfamily. It depends on Mg(2+) as a cofactor.

It is found in the cell inner membrane. The catalysed reaction is UDP-N-acetyl-alpha-D-muramoyl-L-alanyl-gamma-D-glutamyl-meso-2,6-diaminopimeloyl-D-alanyl-D-alanine + di-trans,octa-cis-undecaprenyl phosphate = di-trans,octa-cis-undecaprenyl diphospho-N-acetyl-alpha-D-muramoyl-L-alanyl-D-glutamyl-meso-2,6-diaminopimeloyl-D-alanyl-D-alanine + UMP. The protein operates within cell wall biogenesis; peptidoglycan biosynthesis. Functionally, catalyzes the initial step of the lipid cycle reactions in the biosynthesis of the cell wall peptidoglycan: transfers peptidoglycan precursor phospho-MurNAc-pentapeptide from UDP-MurNAc-pentapeptide onto the lipid carrier undecaprenyl phosphate, yielding undecaprenyl-pyrophosphoryl-MurNAc-pentapeptide, known as lipid I. The sequence is that of Phospho-N-acetylmuramoyl-pentapeptide-transferase from Trichlorobacter lovleyi (strain ATCC BAA-1151 / DSM 17278 / SZ) (Geobacter lovleyi).